The chain runs to 516 residues: Delta(24)-sterol reductase (516 aa).

The N-terminal stretch at 1-22 (MEPAVSLAVCALLFLLWVRVKG) is a signal peptide. Over 23–31 (LEFVLIHQR) the chain is Lumenal. A helical transmembrane segment spans residues 32–52 (WVFVCLFLLPLSLIFDIYYYV). The Cytoplasmic portion of the chain corresponds to 53 to 516 (RAWVVFKLSS…YDKICKAARH (464 aa)). Residues 58–234 (FKLSSAPRLH…VAAEIRIIPA (177 aa)) enclose the FAD-binding PCMH-type domain. Residue 163–175 (TVGGLIMGTGIES) coordinates FAD.

This sequence belongs to the FAD-binding oxidoreductase/transferase type 4 family. Requires FAD as cofactor.

The protein resides in the endoplasmic reticulum membrane. The protein localises to the golgi apparatus membrane. It carries out the reaction 5alpha-cholest-8-en-3beta-ol + NADP(+) = zymosterol + NADPH + H(+). The catalysed reaction is cholesterol + NADP(+) = desmosterol + NADPH + H(+). The enzyme catalyses lanosterol + NADPH + H(+) = 24,25-dihydrolanosterol + NADP(+). It functions in the pathway steroid biosynthesis; cholesterol biosynthesis. Catalyzes the reduction of the delta-24 double bond of sterol intermediates during cholesterol biosynthesis. In addition to its cholesterol-synthesizing activity, can protect cells from oxidative stress by reducing caspase 3 activity during apoptosis induced by oxidative stress. Also protects against amyloid-beta peptide-induced apoptosis. The protein is Delta(24)-sterol reductase (Dhcr24) of Mus musculus (Mouse).